The sequence spans 101 residues: uncharacterized protein (101 aa).

2 helical membrane-spanning segments follow: residues 52 to 72 (VVFIIVFLTGWAAKSIIVKLL) and 75 to 95 (LWRLSTLIPSFFASFFMSLLG).

Its subcellular location is the endoplasmic reticulum membrane. This is an uncharacterized protein from Schizosaccharomyces pombe (strain 972 / ATCC 24843) (Fission yeast).